We begin with the raw amino-acid sequence, 252 residues long: 3-dehydroquinate dehydratase (252 aa).

Residues E46 to R48 and R82 contribute to the 3-dehydroquinate site. The Proton donor/acceptor role is filled by H143. K170 acts as the Schiff-base intermediate with substrate in catalysis. Positions 212, 231, and 235 each coordinate 3-dehydroquinate.

The protein belongs to the type-I 3-dehydroquinase family. Homodimer.

The catalysed reaction is 3-dehydroquinate = 3-dehydroshikimate + H2O. It participates in metabolic intermediate biosynthesis; chorismate biosynthesis; chorismate from D-erythrose 4-phosphate and phosphoenolpyruvate: step 3/7. Involved in the third step of the chorismate pathway, which leads to the biosynthesis of aromatic amino acids. Catalyzes the cis-dehydration of 3-dehydroquinate (DHQ) and introduces the first double bond of the aromatic ring to yield 3-dehydroshikimate. The chain is 3-dehydroquinate dehydratase from Listeria monocytogenes serotype 4a (strain HCC23).